Reading from the N-terminus, the 219-residue chain is Small ribosomal subunit protein uS3c (219 aa).

A KH type-2 domain is found at 39 to 109 (IRQYIEKNLS…QIRINVIEVK (71 aa)).

The protein belongs to the universal ribosomal protein uS3 family. Part of the 30S ribosomal subunit.

It localises to the plastid. The protein resides in the cyanelle. This is Small ribosomal subunit protein uS3c (rps3) from Cyanophora paradoxa.